We begin with the raw amino-acid sequence, 514 residues long: MKNIKEVILTGNDLTLEELVLVAREGYKVALSEEAKDSVLESRKIIDDIVENEKVVYGVTTGFGEFCNVSISKEDCKTLQENLIRSHACGYGPKFSTDIVRAIMLTRANALSKGYSGIRIGTLNTLIEMLNAGVHPQIHEKGSLGASGDLAPLAHMVLPMLGLGEAEYKGEIMSGKEAMDKAGIPIIELDAKEGLALINGTQVLTATGALAVYDAIELLKVGDIAAALTIEALRGIKDAFDPRLHVIRAHEGQMATARNILKLIEGSTYVTRQGELRVQDAYSLRCVPQIHGASKDTIDFVKEKVEIEINSVTDNPIVTREGDVISGGNFHGEPMAQPFDFLGIGAAEIANVSERRLERLINHQLNDLPAFLAKHGGLNSGFMITQYAAAALVSENKVLAHPASVDSIPSSANQEDLVSMGTIAARKARDIVDNAKRVLATELMAACQAIDFRADKGFELGKGTKEAYKVIREAIDFIEYDTDIQMYKELDKATELITNGKLLEAVEKAVELEH.

A cross-link (5-imidazolinone (Ala-Gly)) is located at residues 146 to 148 (ASG). 2,3-didehydroalanine (Ser) is present on Ser-147.

This sequence belongs to the PAL/histidase family. Post-translationally, contains an active site 4-methylidene-imidazol-5-one (MIO), which is formed autocatalytically by cyclization and dehydration of residues Ala-Ser-Gly.

Its subcellular location is the cytoplasm. It carries out the reaction L-histidine = trans-urocanate + NH4(+). It functions in the pathway amino-acid degradation; L-histidine degradation into L-glutamate; N-formimidoyl-L-glutamate from L-histidine: step 1/3. In Clostridium tetani (strain Massachusetts / E88), this protein is Histidine ammonia-lyase.